The chain runs to 262 residues: Aconitate isomerase (262 aa).

An N-terminal signal peptide occupies residues 1–22 (MFPRLPTLALGALLLASTPLLA).

As to quaternary structure, monomer.

The catalysed reaction is trans-aconitate = cis-aconitate. With respect to regulation, activated more than 1.5 fold by Ca(2+), Mg(2+), Mn(2+), Ni(2+), Fe(2+), DDT and 1,10-phenanthroline. Strongly inhibited by Ag(+) and Hg(+). Inhibited by addition of 20% (v/v) glycerol. No effect by addition of NADH or NADPH. Involved in assimilation of trans-aconitic acid. Preference for cis-aconitic acid is 14-fold higher than for trans-aconitic acid. Not active on intermediates of tricarboxylic acid (TCA) cycle including citric acid, succinic acid, fumaric acid, and 2-oxoglutaric acid or on other dicarboxilic acids including itaconic acid, formic acid, citraconic acid or maleic acid. This chain is Aconitate isomerase, found in Pseudomonas sp.